Here is a 381-residue protein sequence, read N- to C-terminus: tRNA-specific 2-thiouridylase MnmA (381 aa).

Residues alanine 26–serine 33 and leucine 52 contribute to the ATP site. The Nucleophile role is filled by cysteine 120. An intrachain disulfide couples cysteine 120 to cysteine 217. Glycine 144 provides a ligand contact to ATP. The interval arginine 166–glutamine 168 is interaction with tRNA. Residue cysteine 217 is the Cysteine persulfide intermediate of the active site.

It belongs to the MnmA/TRMU family.

The protein resides in the cytoplasm. The catalysed reaction is S-sulfanyl-L-cysteinyl-[protein] + uridine(34) in tRNA + AH2 + ATP = 2-thiouridine(34) in tRNA + L-cysteinyl-[protein] + A + AMP + diphosphate + H(+). In terms of biological role, catalyzes the 2-thiolation of uridine at the wobble position (U34) of tRNA, leading to the formation of s(2)U34. This is tRNA-specific 2-thiouridylase MnmA from Ruegeria sp. (strain TM1040) (Silicibacter sp.).